We begin with the raw amino-acid sequence, 98 residues long: NADH-ubiquinone oxidoreductase chain 4L (98 aa).

3 helical membrane passes run 1 to 21, 29 to 49, and 61 to 81; these read MSMV…GMLV, SLLC…VTIL, and IVLL…LVMV.

It belongs to the complex I subunit 4L family. In terms of assembly, core subunit of respiratory chain NADH dehydrogenase (Complex I) which is composed of 45 different subunits.

The protein resides in the mitochondrion inner membrane. The catalysed reaction is a ubiquinone + NADH + 5 H(+)(in) = a ubiquinol + NAD(+) + 4 H(+)(out). Core subunit of the mitochondrial membrane respiratory chain NADH dehydrogenase (Complex I) which catalyzes electron transfer from NADH through the respiratory chain, using ubiquinone as an electron acceptor. Part of the enzyme membrane arm which is embedded in the lipid bilayer and involved in proton translocation. The chain is NADH-ubiquinone oxidoreductase chain 4L (MT-ND4L) from Canis latrans (Coyote).